A 550-amino-acid chain; its full sequence is Hydroxylamine reductase (550 aa).

[2Fe-2S] cluster is bound by residues Cys-3, Cys-6, Cys-18, and Cys-25. His-249, Glu-273, Cys-317, Cys-405, Cys-433, Cys-458, Glu-492, and Lys-494 together coordinate hybrid [4Fe-2O-2S] cluster. Cys-405 is modified (cysteine persulfide).

Belongs to the HCP family. The cofactor is [2Fe-2S] cluster. Requires hybrid [4Fe-2O-2S] cluster as cofactor.

It is found in the cytoplasm. The catalysed reaction is A + NH4(+) + H2O = hydroxylamine + AH2 + H(+). In terms of biological role, catalyzes the reduction of hydroxylamine to form NH(3) and H(2)O. The chain is Hydroxylamine reductase from Salmonella agona (strain SL483).